The following is a 1368-amino-acid chain: DNA-directed RNA polymerase subunit beta (1368 aa).

The protein belongs to the RNA polymerase beta chain family. In terms of assembly, the RNAP catalytic core consists of 2 alpha, 1 beta, 1 beta' and 1 omega subunit. When a sigma factor is associated with the core the holoenzyme is formed, which can initiate transcription.

It catalyses the reaction RNA(n) + a ribonucleoside 5'-triphosphate = RNA(n+1) + diphosphate. DNA-dependent RNA polymerase catalyzes the transcription of DNA into RNA using the four ribonucleoside triphosphates as substrates. The protein is DNA-directed RNA polymerase subunit beta of Cupriavidus necator (strain ATCC 17699 / DSM 428 / KCTC 22496 / NCIMB 10442 / H16 / Stanier 337) (Ralstonia eutropha).